The chain runs to 363 residues: 3-isopropylmalate dehydrogenase (363 aa).

78-91 contacts NAD(+); sequence GPKWEHLPPAEQPE. The substrate site is built by Arg-99, Arg-109, Arg-138, and Asp-227. 3 residues coordinate Mg(2+): Asp-227, Asp-251, and Asp-255. Residue 285-297 coordinates NAD(+); sequence GSAPDIAGKNIAN.

Belongs to the isocitrate and isopropylmalate dehydrogenases family. LeuB type 1 subfamily. Homodimer. Mg(2+) serves as cofactor. It depends on Mn(2+) as a cofactor.

The protein resides in the cytoplasm. It catalyses the reaction (2R,3S)-3-isopropylmalate + NAD(+) = 4-methyl-2-oxopentanoate + CO2 + NADH. It functions in the pathway amino-acid biosynthesis; L-leucine biosynthesis; L-leucine from 3-methyl-2-oxobutanoate: step 3/4. Its function is as follows. Catalyzes the oxidation of 3-carboxy-2-hydroxy-4-methylpentanoate (3-isopropylmalate) to 3-carboxy-4-methyl-2-oxopentanoate. The product decarboxylates to 4-methyl-2 oxopentanoate. In Yersinia pestis, this protein is 3-isopropylmalate dehydrogenase.